Here is a 60-residue protein sequence, read N- to C-terminus: Large ribosomal subunit protein bL32 (60 aa).

This sequence belongs to the bacterial ribosomal protein bL32 family.

This chain is Large ribosomal subunit protein bL32, found in Moorella thermoacetica (strain ATCC 39073 / JCM 9320).